Reading from the N-terminus, the 215-residue chain is MRSFTTLNGLAAPMDRPNVDTDLIIPKQFLKSIQRTGFGANLFDELRYLDKGEPGRDNSNRPINPDFPLNFKRYEGASVLLARENFGCGSSREHAPWALDEYGFHCIIAPSFADIFFNNCFKNGILPIVLDEEIVESLFVEMYQTEGYRLVIDLPAQTVTTPSGNSYSFEVDEFRKHCLLKGLDDIGLTLQHADSITAYEAERAKRAPWLFAASE.

This sequence belongs to the LeuD family. LeuD type 1 subfamily. As to quaternary structure, heterodimer of LeuC and LeuD.

It catalyses the reaction (2R,3S)-3-isopropylmalate = (2S)-2-isopropylmalate. It participates in amino-acid biosynthesis; L-leucine biosynthesis; L-leucine from 3-methyl-2-oxobutanoate: step 2/4. Catalyzes the isomerization between 2-isopropylmalate and 3-isopropylmalate, via the formation of 2-isopropylmaleate. The protein is 3-isopropylmalate dehydratase small subunit of Saccharophagus degradans (strain 2-40 / ATCC 43961 / DSM 17024).